The following is a 592-amino-acid chain: Aspartate--tRNA ligase (592 aa).

Glutamate 176 contacts L-aspartate. An aspartate region spans residues 200–203 (QIFK). Residue arginine 222 coordinates L-aspartate. Residues 222–224 (RDE) and glutamine 231 each bind ATP. Histidine 450 is a binding site for L-aspartate. Glutamate 484 contacts ATP. Arginine 491 serves as a coordination point for L-aspartate. 536–539 (GLDR) serves as a coordination point for ATP.

It belongs to the class-II aminoacyl-tRNA synthetase family. Type 1 subfamily. As to quaternary structure, homodimer.

The protein localises to the cytoplasm. It carries out the reaction tRNA(Asp) + L-aspartate + ATP = L-aspartyl-tRNA(Asp) + AMP + diphosphate. Catalyzes the attachment of L-aspartate to tRNA(Asp) in a two-step reaction: L-aspartate is first activated by ATP to form Asp-AMP and then transferred to the acceptor end of tRNA(Asp). In Macrococcus caseolyticus (strain JCSC5402) (Macrococcoides caseolyticum), this protein is Aspartate--tRNA ligase.